Consider the following 85-residue polypeptide: Small ribosomal subunit protein bS20 (85 aa).

Residues 1–25 (MANIKSAIKRAKLSEERRAHNASIK) are disordered.

The protein belongs to the bacterial ribosomal protein bS20 family.

Functionally, binds directly to 16S ribosomal RNA. This is Small ribosomal subunit protein bS20 from Bacillus anthracis (strain A0248).